The following is a 310-amino-acid chain: N-acetyl-gamma-glutamyl-phosphate reductase (310 aa).

Residue Cys-117 is part of the active site.

Belongs to the NAGSA dehydrogenase family. Type 2 subfamily.

Its subcellular location is the cytoplasm. It catalyses the reaction N-acetyl-L-glutamate 5-semialdehyde + phosphate + NADP(+) = N-acetyl-L-glutamyl 5-phosphate + NADPH + H(+). It participates in amino-acid biosynthesis; L-arginine biosynthesis; N(2)-acetyl-L-ornithine from L-glutamate: step 3/4. Its function is as follows. Catalyzes the NADPH-dependent reduction of N-acetyl-5-glutamyl phosphate to yield N-acetyl-L-glutamate 5-semialdehyde. This chain is N-acetyl-gamma-glutamyl-phosphate reductase, found in Rhizobium meliloti (strain 1021) (Ensifer meliloti).